We begin with the raw amino-acid sequence, 481 residues long: MEDLLDQVVVELHRARSCLSDPLVFTQAAVIGSILFVFLLGLYNYFLHPIAHIKGPFLAAVTPISLIRALRDIHNPGPDNHHYTKRGTSEDLILRFVFGANNILLVDEGEDHKRLRGALQPAFTAKAMRDQQDITHYHVQKTVERLLEAAMDPSQTISLTKELNKLVWGNVGNLAFGEPATLEQLENHEKAKDLHAQIAPILEFFQYLNGNPILGRAARGLVGISRKVFGLSGNILGKDQLRRHIASQQGQKNFLTAILGAKESSGLSFDEIHSNMLLLLMGGYDSSAASLSAIFYHLLREPQQYKRLQSELHHAYSSVNDITCNSLLSQPMLNACINESLRLVPPFNGHGSHRVTTSGTMIDGVWVPAGTLISADFYSLHRDPSCWAFPDEYRPERWLKEHQGPGTPFENDVKTAWRPFSLGPRVCVGREMALQSIRLAVSKIVYTFDMTLANRDFVWDRDAGSHYMWHDFDIAVTLAKA.

The chain crosses the membrane as a helical span at residues 23–43; that stretch reads LVFTQAAVIGSILFVFLLGLY. N-linked (GlcNAc...) asparagine glycosylation is present at Asn-338. Cys-427 serves as a coordination point for heme.

Belongs to the cytochrome P450 family. Heme is required as a cofactor.

The protein resides in the membrane. It functions in the pathway secondary metabolite biosynthesis; terpenoid biosynthesis. Its function is as follows. Cytochrome P450 monooxygenase; part of the gene cluster that mediates the biosynthesis of diterpenoid pyrones. The first step of the pathway is the synthesis of the alpha-pyrone moiety by the polyketide synthase dpfgA via condensation of one acetyl-CoA starter unit with 3 malonyl-CoA units and 2 methylations. The alpha-pyrone is then combined with geranylgeranyl pyrophosphate (GGPP) formed by the GGPP synthase dpfgD through the action of the prenyltransferase dpfgC to yield a linear alpha-pyrone diterpenoid. Subsequent steps in the diterpenoid pyrone biosynthetic pathway involve the decalin core formation, which is initiated by the epoxidation of the C10-C11 olefin by the FAD-dependent oxidoreductase dpfgE, and is followed by a cyclization cascade catalyzed by the terpene cyclase dpfgB. The short chain dehydrogenase/reductase dpfgG then oxidizes the 8S hydroxy group to a ketone and the short chain dehydrogenase/reductase dpfgH reduces the ketone to the 8R hydroxy group to yield higginsianin B. Higginsianin B is further methylated by the methyltransferase dpfgI to produce the intermediate named FDDP B. The cytochrome P450 monooxygenase dfgpJ then catalyzes a three-step oxidation at C-27 to generate a carboxylic acid as well as C-26 hydroxylation. Finally, methyltransferase dpfgK methylates the carboxylic acid generated by dpfgJ, yielding the final diterpenoid pyrones from the pathway which were named FDDP D and FDDP E. The sequence is that of Cytochrome P450 monooxygenase dpfgJ from Gibberella zeae (strain ATCC MYA-4620 / CBS 123657 / FGSC 9075 / NRRL 31084 / PH-1) (Wheat head blight fungus).